The following is a 255-amino-acid chain: Tumor necrosis factor receptor superfamily member 9 (255 aa).

A signal peptide spans 1 to 23 (MGNSCYNIVATLLLVLNFERTRS). TNFR-Cys repeat units follow at residues 24–45 (LQDPCSNCPAGTFCDNNRNQIC), 47–86 (PCPPNSFSSAGGQRTCDICRQCKGVFRTRKECSSTSNAEC), 87–118 (DCTPGFHCLGAGCSMCEQDCKQGQELTKKGCK), and 119–159 (DCCF…VVCG). Over 24–186 (LQDPCSNCPA…PAREPGHSPQ (163 aa)) the chain is Extracellular. 9 disulfide bridges follow: Cys-28–Cys-37, Cys-31–Cys-45, Cys-48–Cys-62, Cys-65–Cys-78, Cys-68–Cys-86, Cys-88–Cys-94, Cys-99–Cys-106, Cys-102–Cys-117, and Cys-121–Cys-133. Residues Asn-138 and Asn-149 are each glycosylated (N-linked (GlcNAc...) asparagine). An intrachain disulfide couples Cys-139 to Cys-158. The disordered stretch occupies residues 161-180 (SPADLSPGASSVTPPAPARE). The helical transmembrane segment at 187-213 (IISFFLALTSTALLFLLFFLTLRFSVV) threads the bilayer. At 214 to 255 (KRGRKKLLYIFKQPFMRPVQTTQEEDGCSCRFPEEEEGGCEL) the chain is on the cytoplasmic side. Residues 214–255 (KRGRKKLLYIFKQPFMRPVQTTQEEDGCSCRFPEEEEGGCEL) form an interaction with LRR-1 region.

Predominantly homodimeric, but may also exist as a monomer. Interacts with TRAF1, TRAF2 and TRAF3. Interacts with LRR-repeat protein 1/LRR-1. In terms of tissue distribution, expressed on the surface of activated T-cells.

The protein resides in the cell membrane. In terms of biological role, receptor for TNFSF9/4-1BBL. Conveys a signal that enhances CD8(+) T-cell survival, cytotoxicity, and mitochondrial activity, thereby promoting immunity against viruses and tumors. The chain is Tumor necrosis factor receptor superfamily member 9 (TNFRSF9) from Homo sapiens (Human).